We begin with the raw amino-acid sequence, 473 residues long: Flagellum-specific ATP synthase (473 aa).

187 to 194 lines the ATP pocket; the sequence is AGSGVGKS.

It belongs to the ATPase alpha/beta chains family.

It localises to the cytoplasm. The enzyme catalyses ATP + H2O + 4 H(+)(in) = ADP + phosphate + 5 H(+)(out). Its function is as follows. Probable catalytic subunit of a protein translocase for flagellum-specific export, or a proton translocase involved in local circuits at the flagellum. This Agrobacterium fabrum (strain C58 / ATCC 33970) (Agrobacterium tumefaciens (strain C58)) protein is Flagellum-specific ATP synthase (fliI).